We begin with the raw amino-acid sequence, 763 residues long: High glucose sensor RGT2 (763 aa).

A disordered region spans residues 1–28; the sequence is MNDSQNCLRQREENSHLNPGNDFGHHQG. Over 1 to 99 the chain is Cytoplasmic; that stretch reads MNDSQNCLRQ…PLPLRSNVMS (99 aa). The helical transmembrane segment at 100–120 threads the bilayer; it reads VLVGIFVAVGGFLFGYDTGLI. Over 121–144 the chain is Extracellular; sequence NSITDMPYVKTYIAPNHSYFTTSQ. Asn136 carries an N-linked (GlcNAc...) asparagine glycan. The helical transmembrane segment at 145–165 threads the bilayer; sequence IAILVSFLSLGTFFGALIAPY. Residues 166–175 lie on the Cytoplasmic side of the membrane; sequence ISDSYGRKPT. The helical transmembrane segment at 176–196 threads the bilayer; that stretch reads IMFSTAVIFSIGNSLQVASGG. Leu197 is a topological domain (extracellular). A helical transmembrane segment spans residues 198–218; it reads VLLIVGRVISGIGIGIISAVV. Residues 219 to 231 are Cytoplasmic-facing; it reads PLYQAEAAQKNLR. A helical membrane pass occupies residues 232-252; sequence GAIISSYQWAITIGLLVSSAV. At 253–266 the chain is on the extracellular side; that stretch reads SQGTHSKNGPSSYR. The helical transmembrane segment at 267–287 threads the bilayer; it reads IPIGLQYVWSSILAVGMIFLP. The Cytoplasmic segment spans residues 288-357; it reads ESPRYYVLKD…SENRPKQILR (70 aa). The chain crosses the membrane as a helical span at residues 358–378; it reads IFTGIAIQAFQQASGINFIFY. The Extracellular portion of the chain corresponds to 379–393; it reads YGVNFFNNTGVDNSY. Asn385 carries an N-linked (GlcNAc...) asparagine glycan. The helical transmembrane segment at 394-414 threads the bilayer; it reads LVSFISYAVNVAFSIPGMYLV. Topologically, residues 415–421 are cytoplasmic; that stretch reads DRIGRRP. The chain crosses the membrane as a helical span at residues 422–442; the sequence is VLLAGGVIMAIANLVIAIVGV. Over 443 to 452 the chain is Extracellular; sequence SEGKTVVASK. A helical membrane pass occupies residues 453–473; it reads IMIAFICLFIAAFSATWGGVV. Over 474–491 the chain is Cytoplasmic; sequence WVVSAELYPLGVRSKCTA. A helical membrane pass occupies residues 492-512; that stretch reads ICAAANWLVNFTCALITPYIV. The Extracellular portion of the chain corresponds to 513 to 524; the sequence is DVGSHTSSMGPK. A helical transmembrane segment spans residues 525-545; that stretch reads IFFIWGGLNVVAVIVVYFAVY. Over 546-763 the chain is Cytoplasmic; the sequence is ETRGLTLEEI…SKHSQYTSPQ (218 aa). The segment covering 725-737 has biased composition (low complexity); sequence SSTTSNDTSFSPS. Residues 725-763 are disordered; that stretch reads SSTTSNDTSFSPSHNSNARTSSNWTSDLASKHSQYTSPQ. The span at 738–763 shows a compositional bias: polar residues; it reads HNSNARTSSNWTSDLASKHSQYTSPQ.

It belongs to the major facilitator superfamily. Sugar transporter (TC 2.A.1.1) family. As to quaternary structure, interacts with YCK1. Interacts with MTH1 and STD1. In terms of processing, phosphorylated in the C-terminal tail on Yck consensus sites in a yeast casein kinases YCK1 and YCK2 (Yck)-dependent manner. This phosphorylation is required for interaction with HXT corepressors MTH1 and STD1 and ultimately HXT expression.

Its subcellular location is the cell membrane. Its function is as follows. Low-affinity high glucose sensor that is part of the sensor/receptor-repressor (SSR) glucose-signaling pathway, which detects extracellular glucose and induces expression of glucose transporters that bring glucose into the cell. The transporter-like sensor generates an intracellular signal in the presence of high levels of glucose to promote high glucose-induced expression of HXT1. Binding of glucose to the RGT2 transmembrane domain activates a downstream signaling cascade, leading to phosphorylation of the RGT1 corepressors MTH1 and STD1, targeting them for SCF(Grr1)-dependent ubiquitination and degradation. Depletion of the corepressors robs RGT1 of its ability to repress expression of HXT genes, leading to accumulation of glucose transporters in the plasma membrane. Even though RGT2 is similar to glucose transporters, it appears to be unable to transport glucose. In Saccharomyces cerevisiae (strain ATCC 204508 / S288c) (Baker's yeast), this protein is High glucose sensor RGT2.